A 906-amino-acid chain; its full sequence is Putative disease resistance protein At1g59780 (906 aa).

Positions 20–59 (KLLSQEYERFQGVEEQITELRDDLKMLMAFLSDADAKKQT) form a coiled coil. An NB-ARC domain is found at 138–452 (SHAQLERKRE…AEGITYPGNY (315 aa)). Position 187-194 (187-194 (GLGGLGKT)) interacts with ATP. LRR repeat units lie at residues 572–597 (LPLL…IGKL), 599–619 (HLKY…SLRN), 620–644 (LKSL…VFKE), and 825–850 (MPLL…RFIS).

It belongs to the disease resistance NB-LRR family.

In terms of biological role, potential disease resistance protein. This Arabidopsis thaliana (Mouse-ear cress) protein is Putative disease resistance protein At1g59780.